Here is a 285-residue protein sequence, read N- to C-terminus: Sulfotransferase 2A2 (285 aa).

Residues Lys-44, Ser-45, Gly-46, Thr-47, Asn-48, and Trp-49 each contribute to the 3'-phosphoadenylyl sulfate site. The Proton acceptor role is filled by His-99. Positions 121, 129, 184, 218, 223, 247, 248, and 249 each coordinate 3'-phosphoadenylyl sulfate.

It belongs to the sulfotransferase 1 family.

It is found in the cytoplasm. The enzyme catalyses an alcohol + 3'-phosphoadenylyl sulfate = an alkyl sulfate + adenosine 3',5'-bisphosphate + H(+). In terms of biological role, sulfotransferase that utilizes 3'-phospho-5'-adenylyl sulfate (PAPS) as sulfonate donor to catalyze the sulfate conjugation of a potential wide variety of acceptor molecules bearing a hydroxyl group. Sulfonation increases the water solubility of most compounds, and therefore their renal excretion, but it can also result in bioactivation to form active metabolites. This chain is Sulfotransferase 2A2, found in Mus musculus (Mouse).